Here is a 328-residue protein sequence, read N- to C-terminus: 2,4-dinitroanisole O-demethylase subunit alpha (328 aa).

A propeptide spanning residues 1–9 (MSVTSQTSS) is cleaved from the precursor. 6 residues coordinate Zn(2+): histidine 101, histidine 103, aspartate 105, histidine 168, histidine 225, and cysteine 247.

It belongs to the metallo-beta-lactamase superfamily. As to quaternary structure, part of the complex DnhAB composed of the 2,4-dinitroanisole O-demethylase alpha (DnhA) and beta (DnhB) subunits. Zn(2+) serves as cofactor.

The enzyme catalyses 2,4-dinitroanisole + H2O = 2,4-dinitrophenol + methanol + H(+). Involved in the degradation of 2,4-dinitroanisole (DNAN), an insensitive munition ingredient used in explosive formulations as a replacement for 2,4,6-trinitrotoluene (TNT). Catalyzes the removal of the methyl group from 2,4-dinitroanisole (DNAN) to yield 2,4-dinitrophenol (2,4-DNP) and methanol. In Nocardioides sp. (strain JS1661), this protein is 2,4-dinitroanisole O-demethylase subunit alpha.